The sequence spans 448 residues: Ribosomal protein uS12 methylthiotransferase RimO (448 aa).

Residues 6–116 (PKVGIVSLGC…VVEAVHAAIP (111 aa)) form the MTTase N-terminal domain. The [4Fe-4S] cluster site is built by cysteine 15, cysteine 51, cysteine 80, cysteine 147, cysteine 151, and cysteine 154. The region spanning 133–371 (LTPHHYAYLK…EAARQIADER (239 aa)) is the Radical SAM core domain. In terms of domain architecture, TRAM spans 373–439 (AAKEGTRIEV…DYDLWGDVVE (67 aa)).

It belongs to the methylthiotransferase family. RimO subfamily. [4Fe-4S] cluster is required as a cofactor.

The protein resides in the cytoplasm. It catalyses the reaction L-aspartate(89)-[ribosomal protein uS12]-hydrogen + (sulfur carrier)-SH + AH2 + 2 S-adenosyl-L-methionine = 3-methylsulfanyl-L-aspartate(89)-[ribosomal protein uS12]-hydrogen + (sulfur carrier)-H + 5'-deoxyadenosine + L-methionine + A + S-adenosyl-L-homocysteine + 2 H(+). In terms of biological role, catalyzes the methylthiolation of an aspartic acid residue of ribosomal protein uS12. The chain is Ribosomal protein uS12 methylthiotransferase RimO from Paramagnetospirillum magneticum (strain ATCC 700264 / AMB-1) (Magnetospirillum magneticum).